A 23-amino-acid chain; its full sequence is Retinol-binding protein 3 (23 aa).

The protein resides in the secreted. It is found in the extracellular space. Its subcellular location is the extracellular matrix. It localises to the interphotoreceptor matrix. Its function is as follows. IRBP shuttles 11-cis and all trans retinoids between the retinol isomerase in the pigment epithelium and the visual pigments in the photoreceptor cells of the retina. In Oryctolagus cuniculus (Rabbit), this protein is Retinol-binding protein 3 (RBP3).